Reading from the N-terminus, the 409-residue chain is tRNA-specific 2-thiouridylase MnmA (409 aa).

ATP-binding positions include 40–47 (GLSGGVDS) and leucine 66. Cysteine 127 (nucleophile) is an active-site residue. Cysteine 127 and cysteine 237 are disulfide-bonded. An ATP-binding site is contributed by glycine 152. Residues 187 to 189 (KDQ) are interaction with tRNA. Residue cysteine 237 is the Cysteine persulfide intermediate of the active site. The segment at 342-343 (RY) is interaction with tRNA.

Belongs to the MnmA/TRMU family.

It localises to the cytoplasm. The catalysed reaction is S-sulfanyl-L-cysteinyl-[protein] + uridine(34) in tRNA + AH2 + ATP = 2-thiouridine(34) in tRNA + L-cysteinyl-[protein] + A + AMP + diphosphate + H(+). In terms of biological role, catalyzes the 2-thiolation of uridine at the wobble position (U34) of tRNA, leading to the formation of s(2)U34. The protein is tRNA-specific 2-thiouridylase MnmA of Prochlorococcus marinus (strain MIT 9313).